The following is a 184-amino-acid chain: MESFSSKSLALQAEKKLLSKMAGRSVAHLFIDETSSEVLDELYRVSKEYTHSRPQAQRVIKDLIKVAVKVAVLHRNGSFGPSELALATRFRQKLRQGAMTALSFGEVDFTFEAAVLAGLLIECRDVLLELVEHHLTPKSHGRIRHVFDHFSDPGLLTALYGPDFTQHLGKICDGLRKMLDEGKL.

Phosphoserine is present on S3.

It belongs to the TNFAIP8 family. TNFAIP8L2 subfamily. May interact with CASP8; however, such result is unclear since could not reproduce the interaction with CASP8. Interacts with RAC1. In terms of processing, phosphorylated by TAK1/MAP3K7; this phosphorylation triggers association with BTRC and subsequent ubiquitination and degradation. Post-translationally, ubiquitinated in a BTRC-depdent manner; leading to degradation mediated through the proteasome pathway.

It is found in the cytoplasm. Its subcellular location is the nucleus. The protein localises to the lysosome. Functionally, acts as a negative regulator of innate and adaptive immunity by maintaining immune homeostasis. Plays a regulatory role in the Toll-like signaling pathway by determining the strength of LPS-induced signaling and gene expression. Inhibits TCR-mediated T-cell activation and negatively regulate T-cell function to prevent hyperresponsiveness. Also inhibits autolysosome formation via negatively modulating MTOR activation by interacting with RAC1 and promoting the disassociation of the RAC1-MTOR complex. Plays an essential role in NK-cell biology by acting as a checkpoint and displaying an expression pattern correlating with NK-cell maturation process and by negatively regulating NK-cell maturation and antitumor immunity. Mechanistically, suppresses IL-15-triggered mTOR activity in NK-cells. The protein is Tumor necrosis factor alpha-induced protein 8-like protein 2 (TNFAIP8L2) of Callithrix jacchus (White-tufted-ear marmoset).